We begin with the raw amino-acid sequence, 545 residues long: Purple acid phosphatase 13 (545 aa).

Positions 1-25 (MVVKYTMSMSFFVIFASTVTIIVHG) are cleaved as a signal peptide. N-linked (GlcNAc...) asparagine glycosylation is found at Asn-125 and Asn-145. Position 203 (Asp-203) interacts with Fe cation. Asn-209 carries an N-linked (GlcNAc...) asparagine glycan. Fe cation is bound at residue Tyr-233. N-linked (GlcNAc...) asparagine glycans are attached at residues Asn-240, Asn-254, Asn-306, Asn-321, Asn-351, and Asn-367. The Proton donor role is filled by His-389. Zn(2+) is bound at residue His-416. Position 416–418 (416–418 (HVD)) interacts with substrate. Residues Asn-428, Asn-466, Asn-475, and Asn-510 are each glycosylated (N-linked (GlcNAc...) asparagine).

The protein belongs to the metallophosphoesterase superfamily. Purple acid phosphatase family. In terms of assembly, homodimer. Fe cation is required as a cofactor. It depends on Zn(2+) as a cofactor. In terms of tissue distribution, expressed in stems, leaves, flowers and siliques.

It is found in the secreted. The enzyme catalyses a phosphate monoester + H2O = an alcohol + phosphate. The protein is Purple acid phosphatase 13 (PAP13) of Arabidopsis thaliana (Mouse-ear cress).